Consider the following 347-residue polypeptide: tRNA N6-adenosine threonylcarbamoyltransferase (347 aa).

2 residues coordinate Fe cation: histidine 115 and histidine 119. Substrate-binding positions include 137 to 141, aspartate 170, glycine 183, and asparagine 281; that span reads LASGG. Residue aspartate 309 coordinates Fe cation.

This sequence belongs to the KAE1 / TsaD family. It depends on Fe(2+) as a cofactor.

The protein localises to the cytoplasm. It carries out the reaction L-threonylcarbamoyladenylate + adenosine(37) in tRNA = N(6)-L-threonylcarbamoyladenosine(37) in tRNA + AMP + H(+). In terms of biological role, required for the formation of a threonylcarbamoyl group on adenosine at position 37 (t(6)A37) in tRNAs that read codons beginning with adenine. Is involved in the transfer of the threonylcarbamoyl moiety of threonylcarbamoyl-AMP (TC-AMP) to the N6 group of A37, together with TsaE and TsaB. TsaD likely plays a direct catalytic role in this reaction. The chain is tRNA N6-adenosine threonylcarbamoyltransferase from Methylorubrum populi (strain ATCC BAA-705 / NCIMB 13946 / BJ001) (Methylobacterium populi).